Here is a 268-residue protein sequence, read N- to C-terminus: MRAGELKSLRVAVLGMSLAVGATAAGPARAFDPGAGVTKESGPFALFKFGFSAYKSGRKDEAVEAYRYAAEKGHTGSRWALANMYAYGDGVAENDLEAFKIYSEIAQQGVEPGSEDTGYFVNALISLAGYYRRGIPDTPVRSDLSQARQLYFQAASTFGVAEAQFQLARMLLSGEGGSVNVQQAKKWLNRARKNGHAGAMGVFGNVIFQEGQTARGLAYMTAALGQCSPKDRPWLQAMQEQAFSLATEDDRRVAITMSQNMHLQNDDD.

A signal peptide spans 1-22; that stretch reads MRAGELKSLRVAVLGMSLAVGA.

Its function is as follows. Negatively modulates exopolysaccharide (EPS) biosynthesis. This chain is Exopolysaccharide production negative regulator (exoR), found in Rhizobium meliloti (strain 1021) (Ensifer meliloti).